Here is a 425-residue protein sequence, read N- to C-terminus: Alpha-(1,3)-fucosyltransferase C (425 aa).

Topologically, residues 1–37 (MYLGRVHCSFEVPGLLSGRVGHMSMAVRSVRLACGPR) are cytoplasmic. The helical; Signal-anchor for type II membrane protein transmembrane segment at 38-58 (GALLLLLLVLLGVLVVLHKVT) threads the bilayer. At 59–425 (QSPLLNQNKI…SCRLQSRIRL (367 aa)) the chain is on the lumenal side. N-linked (GlcNAc...) asparagine glycosylation is found at asparagine 187 and asparagine 230.

It belongs to the glycosyltransferase 10 family.

It is found in the golgi apparatus. The protein localises to the golgi stack membrane. Its pathway is protein modification; protein glycosylation. This is Alpha-(1,3)-fucosyltransferase C (FucTC) from Drosophila melanogaster (Fruit fly).